We begin with the raw amino-acid sequence, 248 residues long: Large ribosomal subunit protein uL1 (248 aa).

It belongs to the universal ribosomal protein uL1 family. In terms of assembly, part of the 50S ribosomal subunit.

Its function is as follows. Binds directly to 23S rRNA. The L1 stalk is quite mobile in the ribosome, and is involved in E site tRNA release. Functionally, protein L1 is also a translational repressor protein, it controls the translation of the L11 operon by binding to its mRNA. The polypeptide is Large ribosomal subunit protein uL1 (Orientia tsutsugamushi (strain Boryong) (Rickettsia tsutsugamushi)).